We begin with the raw amino-acid sequence, 984 residues long: Respiratory nitrate reductase subunit alpha (984 aa).

A disordered region spans residues 1 to 43 (MSRNDASQLDDGETTAESPPDDQANDAPEVGDPPGDPVDADSG). Acidic residues predominate over residues 8-24 (QLDDGETTAESPPDDQA). The 4Fe-4S Mo/W bis-MGD-type domain maps to 103-167 (DSVSRSTHSV…CYTDYVNADQ (65 aa)). [4Fe-4S] cluster-binding residues include H110, C114, C118, and C153. A Mo-bis(molybdopterin guanine dinucleotide)-binding site is contributed by D249.

It belongs to the prokaryotic molybdopterin-containing oxidoreductase family. As to quaternary structure, probable multiprotein complex; a catalytic heterodimer of an alpha and beta chain is proposed to associate with additional subunits involved in membrane attachment and electron transfer. It depends on [4Fe-4S] cluster as a cofactor. The cofactor is Mo-bis(molybdopterin guanine dinucleotide). Post-translationally, exported by the Tat system.

The protein resides in the cell membrane. The catalysed reaction is nitrate + a quinol = a quinone + nitrite + H2O. Inhibited by cyanide, azide and antimycin A. Enzyme stability is not dependent on salt concentration. Functionally, the respiratory membrane-bound nitrate reductase enzyme complex plays a role in generation of metabolic energy by using nitrate as a terminal electron acceptor during anaerobic conditions. The alpha chain is the actual site of nitrate reduction. The polypeptide is Respiratory nitrate reductase subunit alpha (narG) (Haloferax mediterranei (strain ATCC 33500 / DSM 1411 / JCM 8866 / NBRC 14739 / NCIMB 2177 / R-4) (Halobacterium mediterranei)).